We begin with the raw amino-acid sequence, 2028 residues long: Protein Daple (2028 aa).

The region spanning 11–131 (LFLQSPLVTW…KVLLLVLGCA (121 aa)) is the Calponin-homology (CH) domain. The interval 222–250 (AQHPPSPIKSSSADSTPSPTSSLSSEDKQ) is disordered. Residues serine 227 and serine 239 each carry the phosphoserine modification. Positions 229 to 245 (IKSSSADSTPSPTSSLS) are enriched in low complexity. Coiled-coil stretches lie at residues 247 to 428 (EDKQ…SMNE), 456 to 1017 (ELNE…QGEG), 1045 to 1094 (HKEA…SSQI), and 1139 to 1393 (LQNH…DQYK). The residue at position 486 (serine 486) is a Phosphoserine. Residues 1011 to 1024 (RQNQGEGQHLQNSF) are compositionally biased toward polar residues. A disordered region spans residues 1011–1043 (RQNQGEGQHLQNSFKHPAGKTAASHQGKEAWGP). The span at 1419–1428 (KEGSRERLKS) shows a compositional bias: basic and acidic residues. Disordered stretches follow at residues 1419 to 1724 (KEGS…GAKM) and 1736 to 1803 (AAPT…SLSR). 3 stretches are compositionally biased toward low complexity: residues 1439 to 1450 (SSDPASPAASQP), 1517 to 1534 (SRTCSTSATTTAPSNSTP), and 1568 to 1588 (SRPSSLESSRNTSSNSSPLNL). At serine 1444 the chain carries Phosphoserine. The segment covering 1589-1604 (KGSSEQLHGRSESFSS) has biased composition (polar residues). Serine 1601 bears the Phosphoserine mark. The GBA motif lies at 1661 to 1691 (CSASPSSEMVTLEEFLEESNRSSPTHDTPSC). The span at 1689-1704 (PSCRDDLLSDYFRKAS) shows a compositional bias: basic and acidic residues. A compositionally biased stretch (low complexity) spans 1792-1803 (HAPASRSASLSR). A Phosphoserine modification is found at serine 1806. Residues 1816–2021 (SGPEACKQES…PEPGGDPQTV (206 aa)) form a disordered region. Positions 1842 to 1855 (SHTLQSPAPPSSHS) are enriched in polar residues. Residues 1879–1897 (RPLDTRRFSLAPPKEERLA) show a composition bias toward basic and acidic residues. Residues 1902-1924 (SATAPAIATAGAGAAAAGSGSNS) show a composition bias toward low complexity. A Phosphothreonine modification is found at threonine 1954. A PDZ-binding motif is present at residues 2025 to 2028 (YGCV). Residues 2026–2028 (GCV) form a DVL1-binding region.

The protein belongs to the CCDC88 family. In terms of assembly, homooligomer. Interacts with DVL1 (via PDZ domain); dissociates following initiation of non-canonical Wnt signaling. Interacts (via C-terminus) with ligand-activated Wnt receptor FZD7; competes with DVL1 for binding to FZD7 and displaces DVL1 from ligand-activated FZD7. Interacts (via GBA motif) with guanine nucleotide-binding protein G(i) alpha subunits GNAI1, GNAI2 and GNAI3 (inactive GDP-bound form); interacts with higher affinity with GNAI1 and GNAI3 than with GNAI2 and interaction leads to G(i) alpha subunit activation. Does not interact with GNAO1.

It localises to the cytoplasm. Its subcellular location is the cell junction. In terms of biological role, required for activation of guanine nucleotide-binding proteins (G-proteins) during non-canonical Wnt signaling. Binds to ligand-activated Wnt receptor FZD7, displacing DVL1 from the FZD7 receptor and leading to inhibition of canonical Wnt signaling. Acts as a non-receptor guanine nucleotide exchange factor by also binding to guanine nucleotide-binding protein G(i) alpha (Gi-alpha) subunits, leading to their activation. Binding to Gi-alpha subunits displaces the beta and gamma subunits from the heterotrimeric G-protein complex, triggering non-canonical Wnt responses such as activation of RAC1 and PI3K-AKT signaling. Promotes apical constriction of cells via ARHGEF18. The polypeptide is Protein Daple (CCDC88C) (Homo sapiens (Human)).